We begin with the raw amino-acid sequence, 485 residues long: MTITLQQLIALSPLLIVGLTVVVVMLCIAWRRNHFVNATMTVIGLNIALLSLYFVGQVGPTDVTPLLRVDGFSMFYTGLVLLASLATSTFAYPWLQGYPDNRDEFYLLVLIAALGGILLSSANHLASLFIGIELLSLPLFGLVGYAFRLKRSLEASIKYMLLSAAASSFLLFGMALIYAESGDMSFASLGKSLSDHQIHEPLLLAGLGMMIVGLGFKLSLVPFQLWTPDVYQGAPAPVSTFLATAGKIAVFGAVMRLFLYAPVADSESVRIVLSIIAFASIMFGNVMAVSQTNIKRLLGYSSIAHLGYLLVALIAVQSHQLALETVGVYLVGYLFSSLGAFGVVSLMSSPYRGPDADSLFSYRGLFWHKPILSAVMTVMMLSLAGIPMTLGFFGKFYVLAVGVNAELWWLTGAVVLGSAIGLYYYLRVMVSLFLNAPQVLQRDTPNNWALTAGGVVVLISSIVVLFFGLYPQPLISLVQLVQPMM.

14 consecutive transmembrane segments (helical) span residues 8–28 (LIALSPLLIVGLTVVVVMLCI), 35–55 (FVNATMTVIGLNIALLSLYFV), 75–95 (FYTGLVLLASLATSTFAYPWL), 105–125 (FYLLVLIAALGGILLSSANHL), 127–147 (SLFIGIELLSLPLFGLVGYAF), 159–179 (YMLLSAAASSFLLFGMALIYA), 203–223 (LLAGLGMMIVGLGFKLSLVPF), 235–255 (PAPVSTFLATAGKIAVFGAVM), 271–291 (IVLSIIAFASIMFGNVMAVSQ), 297–317 (LLGYSSIAHLGYLLVALIAVQ), 326–346 (VGVYLVGYLFSSLGAFGVVSL), 374–394 (AVMTVMMLSLAGIPMTLGFFG), 407–426 (LWWLTGAVVLGSAIGLYYYL), and 449–469 (ALTAGGVVVLISSIVVLFFGL).

Belongs to the complex I subunit 2 family. NDH-1 is composed of 13 different subunits. Subunits NuoA, H, J, K, L, M, N constitute the membrane sector of the complex.

The protein resides in the cell inner membrane. The catalysed reaction is a quinone + NADH + 5 H(+)(in) = a quinol + NAD(+) + 4 H(+)(out). In terms of biological role, NDH-1 shuttles electrons from NADH, via FMN and iron-sulfur (Fe-S) centers, to quinones in the respiratory chain. The immediate electron acceptor for the enzyme in this species is believed to be ubiquinone. Couples the redox reaction to proton translocation (for every two electrons transferred, four hydrogen ions are translocated across the cytoplasmic membrane), and thus conserves the redox energy in a proton gradient. The protein is NADH-quinone oxidoreductase subunit N of Pectobacterium atrosepticum (strain SCRI 1043 / ATCC BAA-672) (Erwinia carotovora subsp. atroseptica).